The primary structure comprises 485 residues: Bifunctional protein GlmU (485 aa).

The pyrophosphorylase stretch occupies residues 1 to 241 (MSASDFSSAV…ARELAGVNDR (241 aa)). UDP-N-acetyl-alpha-D-glucosamine-binding positions include 13–16 (LAAG), K27, Q84, and 89–90 (GT). Position 114 (D114) interacts with Mg(2+). Residues G151, E166, N181, and N239 each contribute to the UDP-N-acetyl-alpha-D-glucosamine site. N239 serves as a coordination point for Mg(2+). The linker stretch occupies residues 242-262 (VQLAEAGAELNRRTVIAAMRG). Residues 263-485 (GATIVDPATT…AAQNVHNQEG (223 aa)) are N-acetyltransferase. 2 residues coordinate UDP-N-acetyl-alpha-D-glucosamine: R344 and K362. The Proton acceptor role is filled by H374. Y377 and N388 together coordinate UDP-N-acetyl-alpha-D-glucosamine. Acetyl-CoA-binding positions include A391, 397–398 (NY), S416, and A434. Positions 465–485 (RPGTAAAQAAEAAQNVHNQEG) are disordered. The segment covering 469 to 478 (AAAQAAEAAQ) has biased composition (low complexity).

It in the N-terminal section; belongs to the N-acetylglucosamine-1-phosphate uridyltransferase family. This sequence in the C-terminal section; belongs to the transferase hexapeptide repeat family. Homotrimer. Mg(2+) is required as a cofactor.

Its subcellular location is the cytoplasm. The catalysed reaction is alpha-D-glucosamine 1-phosphate + acetyl-CoA = N-acetyl-alpha-D-glucosamine 1-phosphate + CoA + H(+). It carries out the reaction N-acetyl-alpha-D-glucosamine 1-phosphate + UTP + H(+) = UDP-N-acetyl-alpha-D-glucosamine + diphosphate. It functions in the pathway nucleotide-sugar biosynthesis; UDP-N-acetyl-alpha-D-glucosamine biosynthesis; N-acetyl-alpha-D-glucosamine 1-phosphate from alpha-D-glucosamine 6-phosphate (route II): step 2/2. It participates in nucleotide-sugar biosynthesis; UDP-N-acetyl-alpha-D-glucosamine biosynthesis; UDP-N-acetyl-alpha-D-glucosamine from N-acetyl-alpha-D-glucosamine 1-phosphate: step 1/1. Its pathway is bacterial outer membrane biogenesis; LPS lipid A biosynthesis. Catalyzes the last two sequential reactions in the de novo biosynthetic pathway for UDP-N-acetylglucosamine (UDP-GlcNAc). The C-terminal domain catalyzes the transfer of acetyl group from acetyl coenzyme A to glucosamine-1-phosphate (GlcN-1-P) to produce N-acetylglucosamine-1-phosphate (GlcNAc-1-P), which is converted into UDP-GlcNAc by the transfer of uridine 5-monophosphate (from uridine 5-triphosphate), a reaction catalyzed by the N-terminal domain. The protein is Bifunctional protein GlmU of Corynebacterium glutamicum (strain ATCC 13032 / DSM 20300 / JCM 1318 / BCRC 11384 / CCUG 27702 / LMG 3730 / NBRC 12168 / NCIMB 10025 / NRRL B-2784 / 534).